The chain runs to 322 residues: MRPEAQAGHLPVSQSPAVHLPVLYTQVLEGLRVIENGRYLDGTFGRGGHARGVLTQLGPEGRLLVMDKDPEAIAVAERDFAPDPRVSIFRGSFAQLLQWDATAEGLDGVLFDLGVSSPQLDVAERGFSFGKDGPLDMRMDPDSGESAAQWINRVEDREIADVLWTYGEERQSRRIARAIVARREKQPFSRTAELAELIASVMPRGKDKIHPATRSFQAIRIHINRELADLEAGLDAAVERLKPGGRLAIISFHSLEDRIVKQYMNRLAKAPPANRRLPEAEVFVPTLDLIGGAIKATDEELAANPRARSAVLRVAQKREADA.

S-adenosyl-L-methionine-binding positions include 47–49 (GGH), Asp-67, Phe-93, Asp-112, and Gln-119.

It belongs to the methyltransferase superfamily. RsmH family.

Its subcellular location is the cytoplasm. It carries out the reaction cytidine(1402) in 16S rRNA + S-adenosyl-L-methionine = N(4)-methylcytidine(1402) in 16S rRNA + S-adenosyl-L-homocysteine + H(+). Its function is as follows. Specifically methylates the N4 position of cytidine in position 1402 (C1402) of 16S rRNA. The protein is Ribosomal RNA small subunit methyltransferase H of Stenotrophomonas maltophilia (strain R551-3).